The chain runs to 434 residues: CC-adding tRNA nucleotidyltransferase (434 aa).

A CTP-binding site is contributed by 19-22 (GAVR). Residues Asp-32 and Asp-34 each coordinate Mg(2+). CTP is bound by residues 90-91 (RD), Asn-95, 130-139 (DHLRSLRGVR), and Arg-175.

It belongs to the tRNA nucleotidyltransferase/poly(A) polymerase family. Mg(2+) is required as a cofactor.

The enzyme catalyses a tRNA precursor + 2 CTP = a tRNA with a 3' CC end + 2 diphosphate. In terms of biological role, tRNA nucleotidyltransferase involved in the synthesis of the tRNA CCA terminus. Adds the two cytidine residues to tRNA. In Thermus thermophilus (strain ATCC BAA-163 / DSM 7039 / HB27), this protein is CC-adding tRNA nucleotidyltransferase.